The chain runs to 452 residues: Agmatine coumaroyltransferase (452 aa).

Catalysis depends on proton acceptor residues histidine 163 and aspartate 396.

This sequence belongs to the plant acyltransferase family.

The catalysed reaction is 4-coumaroyl-CoA + agmatine = N-(4-guanidinobutyl)-4-hydroxycinnamamide + CoA + H(+). Involved in the biosynthesis of hydroxycinnamic acid amides, which play a role in defense against pathogens. Agmatine is the preferred acyl acceptor, lower activity is observed towards putrescine. The preferred acyl donor is p-coumaroyl-CoA, lower activity is seen towards feruloyl-CoA. The polypeptide is Agmatine coumaroyltransferase (Arabidopsis thaliana (Mouse-ear cress)).